Consider the following 396-residue polypeptide: MGHKHIAIFNIPAHGHINPTLALTASLVKRGYRVTYPVTDEFVKAVEETGAEPLNYRSTLNIDPQQIRELMKNKKDMSQAPLMFIKEMEEVLPQLEALYENDKPDLILFDFMAMAGKLLAEKFGIEAVRLCSTYAQNEHFTFRSISEEFKIELTPEQEDALKNSNLPSFNFEDMFEPAKLNIVFMPRAFQPYGETFDERFSFVGPSLAKRKFQEKETPIISDSGRPVMLISLGTAFNAWPEFYHMCIEAFRDTKWQVIMAVGTTIDPESFDDIPENFSIHQRVPQLEILKKAELFITHGGMNSTMEGLNAGVPLVAVPQMPEQEITARRVEELGLGKHLQPEDTTAASLREAVSQTDGDPHVLKRIQDMQKHIKQAGGAEKAADEIEAFLAPAGVK.

UDP is bound by residues Asn-18, Thr-234, Val-283, His-298, and 302–306; that span reads NSTME.

Belongs to the UDP-glycosyltransferase family.

It catalyses the reaction an NDP-glycose + an acceptor = a glycosylated acceptor + NDP.. Glycosyltransferase that can glycosylate a wide range of substrates, including various flavonoids (flavones, flavonols, flavanones, flavanols, chalcones), isoflavonoids and stilbenes, to produce multiple glycosylated products. It can accept diverse nucleotide diphosphate-D/L-sugars as donors, including ADP-, GDP-, CDP-, TDP- or UDP-alpha-D-glucose, and catalyzes O-, N-, or S-glycosylation. In vitro, catalyzes the glycosylation of, among others, apigenin, 3-hydroxyflavone, phloretin or resveratrol, resulting in multiple glucosylated products, along with mono-, di-, tri- and tetraglucosides. Can also catalyze the glycosylation of the macrolide epothilone A with diverse NDP-D/L-sugars, forming different epothilone A glycoside derivatives. The protein is NDP-glycosyltransferase YjiC of Bacillus licheniformis (strain ATCC 14580 / DSM 13 / JCM 2505 / CCUG 7422 / NBRC 12200 / NCIMB 9375 / NCTC 10341 / NRRL NRS-1264 / Gibson 46).